A 177-amino-acid polypeptide reads, in one-letter code: Large ribosomal subunit protein uL6 (177 aa).

It belongs to the universal ribosomal protein uL6 family. In terms of assembly, part of the 50S ribosomal subunit.

In terms of biological role, this protein binds to the 23S rRNA, and is important in its secondary structure. It is located near the subunit interface in the base of the L7/L12 stalk, and near the tRNA binding site of the peptidyltransferase center. The chain is Large ribosomal subunit protein uL6 from Zymomonas mobilis subsp. mobilis (strain ATCC 31821 / ZM4 / CP4).